Reading from the N-terminus, the 78-residue chain is Short neurotoxin 342 (78 aa).

The N-terminal stretch at 1–21 (MKTLLLTLVVLTIVCLDLGYT) is a signal peptide. 4 disulfide bridges follow: cysteine 24–cysteine 43, cysteine 38–cysteine 57, cysteine 59–cysteine 70, and cysteine 71–cysteine 76.

It belongs to the three-finger toxin family. Short-chain subfamily. Type I alpha-neurotoxin sub-subfamily. Expressed by the venom gland.

It is found in the secreted. Its function is as follows. Binds to muscle nicotinic acetylcholine receptor (nAChR) and inhibit acetylcholine from binding to the receptor, thereby impairing neuromuscular transmission. The chain is Short neurotoxin 342 from Drysdalia coronoides (White-lipped snake).